Reading from the N-terminus, the 115-residue chain is Large ribosomal subunit protein uL23 (115 aa).

Belongs to the universal ribosomal protein uL23 family. Part of the 50S ribosomal subunit. Contacts protein L29, and trigger factor when it is bound to the ribosome.

Functionally, one of the early assembly proteins it binds 23S rRNA. One of the proteins that surrounds the polypeptide exit tunnel on the outside of the ribosome. Forms the main docking site for trigger factor binding to the ribosome. The sequence is that of Large ribosomal subunit protein uL23 from Granulibacter bethesdensis (strain ATCC BAA-1260 / CGDNIH1).